The chain runs to 141 residues: NADH dehydrogenase [ubiquinone] 1 alpha subcomplex subunit 11 (141 aa).

N-acetylalanine is present on alanine 2. The next 2 helical transmembrane spans lie at 21-43 and 58-80; these read KAYS…RVTL and QYTF…SAHV.

This sequence belongs to the complex I NDUFA11 subunit family. As to quaternary structure, complex I is composed of 45 different subunits.

The protein localises to the mitochondrion inner membrane. Functionally, accessory subunit of the mitochondrial membrane respiratory chain NADH dehydrogenase (Complex I), that is believed not to be involved in catalysis. Complex I functions in the transfer of electrons from NADH to the respiratory chain. The immediate electron acceptor for the enzyme is believed to be ubiquinone. This Homo sapiens (Human) protein is NADH dehydrogenase [ubiquinone] 1 alpha subcomplex subunit 11 (NDUFA11).